A 144-amino-acid polypeptide reads, in one-letter code: Putative pre-16S rRNA nuclease (144 aa).

This sequence belongs to the YqgF nuclease family.

Its subcellular location is the cytoplasm. Could be a nuclease involved in processing of the 5'-end of pre-16S rRNA. The protein is Putative pre-16S rRNA nuclease of Symbiobacterium thermophilum (strain DSM 24528 / JCM 14929 / IAM 14863 / T).